Reading from the N-terminus, the 440-residue chain is tRNA-2-methylthio-N(6)-dimethylallyladenosine synthase (440 aa).

One can recognise an MTTase N-terminal domain in the interval 5-121 (KKLYIKTYGC…LPEMEAKAGT (117 aa)). Cysteine 14, cysteine 50, cysteine 84, cysteine 159, cysteine 163, and cysteine 166 together coordinate [4Fe-4S] cluster. The 234-residue stretch at 145–378 (AKRGPTAFLT…LTRQQREVQD (234 aa)) folds into the Radical SAM core domain. Residues 378-440 (DSMVGRELGV…ANSLAGELID (63 aa)) enclose the TRAM domain.

The protein belongs to the methylthiotransferase family. MiaB subfamily. Monomer. [4Fe-4S] cluster is required as a cofactor.

It localises to the cytoplasm. It catalyses the reaction N(6)-dimethylallyladenosine(37) in tRNA + (sulfur carrier)-SH + AH2 + 2 S-adenosyl-L-methionine = 2-methylsulfanyl-N(6)-dimethylallyladenosine(37) in tRNA + (sulfur carrier)-H + 5'-deoxyadenosine + L-methionine + A + S-adenosyl-L-homocysteine + 2 H(+). Its function is as follows. Catalyzes the methylthiolation of N6-(dimethylallyl)adenosine (i(6)A), leading to the formation of 2-methylthio-N6-(dimethylallyl)adenosine (ms(2)i(6)A) at position 37 in tRNAs that read codons beginning with uridine. In Ruegeria sp. (strain TM1040) (Silicibacter sp.), this protein is tRNA-2-methylthio-N(6)-dimethylallyladenosine synthase.